The chain runs to 403 residues: Argininosuccinate synthase (403 aa).

ATP-binding positions include 12-20 (AYSGGLDTS) and Ala-39. Residues Tyr-90 and Ser-95 each contribute to the L-citrulline site. Gly-120 is a binding site for ATP. Thr-122, Asn-126, and Asp-127 together coordinate L-aspartate. Asn-126 contacts L-citrulline. L-citrulline is bound by residues Arg-130, Ser-182, Ser-191, Glu-267, and Tyr-279.

Belongs to the argininosuccinate synthase family. Type 1 subfamily. As to quaternary structure, homotetramer.

The protein localises to the cytoplasm. It carries out the reaction L-citrulline + L-aspartate + ATP = 2-(N(omega)-L-arginino)succinate + AMP + diphosphate + H(+). The protein operates within amino-acid biosynthesis; L-arginine biosynthesis; L-arginine from L-ornithine and carbamoyl phosphate: step 2/3. The protein is Argininosuccinate synthase of Ruthia magnifica subsp. Calyptogena magnifica.